We begin with the raw amino-acid sequence, 125 residues long: Temptin (125 aa).

Residues 1-22 form the signal peptide; it reads MEQKRTLRVFLAVSLLCALANA. Intrachain disulfides connect cysteine 40-cysteine 125 and cysteine 79-cysteine 99. A disordered region spans residues 78–125; that stretch reads LCDMDSDGDGRSNGVELGDPECVWSQGETPARTTDLSHPGFDEATVSC. A compositionally biased stretch (polar residues) spans 103–113; the sequence is QGETPARTTDL.

Binds to attractin and enticin. As to expression, produced by the albumen gland of the egg cordons.

Its subcellular location is the secreted. Functionally, a component of the complex of water-borne protein pheromones that stimulates attraction and mating behavior. Modulates pheromone signaling by direct binding to attractin. The chain is Temptin from Aplysia californica (California sea hare).